A 128-amino-acid polypeptide reads, in one-letter code: Large ribosomal subunit protein bL12 (128 aa).

Belongs to the bacterial ribosomal protein bL12 family. Homodimer. Part of the ribosomal stalk of the 50S ribosomal subunit. Forms a multimeric L10(L12)X complex, where L10 forms an elongated spine to which 2 to 4 L12 dimers bind in a sequential fashion. Binds GTP-bound translation factors.

Forms part of the ribosomal stalk which helps the ribosome interact with GTP-bound translation factors. Is thus essential for accurate translation. The protein is Large ribosomal subunit protein bL12 of Synechococcus sp. (strain CC9902).